Here is a 137-residue protein sequence, read N- to C-terminus: Large ribosomal subunit protein uL16 (137 aa).

The protein belongs to the universal ribosomal protein uL16 family. Part of the 50S ribosomal subunit.

Its function is as follows. Binds 23S rRNA and is also seen to make contacts with the A and possibly P site tRNAs. The polypeptide is Large ribosomal subunit protein uL16 (Legionella pneumophila (strain Paris)).